We begin with the raw amino-acid sequence, 1368 residues long: DNA-directed RNA polymerase subunit beta (1368 aa).

It belongs to the RNA polymerase beta chain family. As to quaternary structure, the RNAP catalytic core consists of 2 alpha, 1 beta, 1 beta' and 1 omega subunit. When a sigma factor is associated with the core the holoenzyme is formed, which can initiate transcription.

The enzyme catalyses RNA(n) + a ribonucleoside 5'-triphosphate = RNA(n+1) + diphosphate. Functionally, DNA-dependent RNA polymerase catalyzes the transcription of DNA into RNA using the four ribonucleoside triphosphates as substrates. The polypeptide is DNA-directed RNA polymerase subunit beta (Cupriavidus metallidurans (strain ATCC 43123 / DSM 2839 / NBRC 102507 / CH34) (Ralstonia metallidurans)).